The sequence spans 1674 residues: Kinesin-like protein KIF21A (1674 aa).

Position 1 is an N-acetylmethionine (methionine 1). Residues 9–371 (SVRVAVRIRP…LKYANRARNI (363 aa)) enclose the Kinesin motor domain. 88–95 (GQTGAGKT) serves as a coordination point for ATP. Residues 365-575 (ANRARNIKNK…NREERSVAGK (211 aa)) adopt a coiled-coil conformation. Position 524 is a phosphoserine (serine 524). Disordered regions lie at residues 556–641 (KKRL…DEKA), 779–804 (EEQE…DQRK), and 841–881 (SDKV…AQQK). Residues 560 to 597 (QKLEESNREERSVAGKEDNTDTDQEKKEEKGVSERENN) are compositionally biased toward basic and acidic residues. The segment covering 598–637 (ELEVEESQEVSDHEDEEEEEEEEEDDIDGGESSDESDSES) has biased composition (acidic residues). Positions 851–865 (KLSSSDAPAQDTGSS) are enriched in polar residues. 2 coiled-coil regions span residues 931-1019 (TDII…AKEE) and 1053-1083 (LQAA…NQLL). Residues 1116-1138 (VEDSTDEDAPLNSPGSEGSTLSS) are disordered. Polar residues predominate over residues 1128-1138 (SPGSEGSTLSS). The tract at residues 1146–1167 (EVKPKNKARRRTTTQMELLYAD) is interaction with KANK1 and KANK2. 2 stretches are compositionally biased toward polar residues: residues 1170-1179 (ELASDTSTGD) and 1196-1205 (GMNTETSGTS). The segment at 1170–1318 (ELASDTSTGD…SSLSEVHRSS (149 aa)) is disordered. A phosphoserine mark is found at serine 1212, serine 1225, serine 1229, and serine 1239. Residues 1245 to 1262 (KAYEKAEKSKAKEQKHSD) are compositionally biased toward basic and acidic residues. Positions 1288 to 1297 (NRLTVSQGNT) are enriched in polar residues. 7 WD repeats span residues 1345 to 1382 (GHTK…EIMS), 1385 to 1423 (GHPN…KCIR), 1449 to 1487 (SGEN…STGK), 1490 to 1532 (GHLG…LGTV), 1541 to 1578 (PHYD…LLQQ), 1582 to 1621 (AHKD…PVGE), and 1624 to 1661 (GHDS…DGQI). The residue at position 1662 (serine 1662) is a Phosphoserine. Residue threonine 1664 is modified to Phosphothreonine. Residue serine 1673 is modified to Phosphoserine.

This sequence belongs to the TRAFAC class myosin-kinesin ATPase superfamily. Kinesin family. As to quaternary structure, part of a cortical microtubule stabilization complex (CMSC) composed of KANK1, PPFIA1, PPFIBP1, ERC1/ELKS, PHLDB2/LL5beta, CLASPs, KIF21A and possibly additional interactors; within CMSCs KANK1 and PHLDB2/LL5beta seem to be the core components for recruiting microtubule-binding proteins KIF21A and CLASPs, whereas PPFIA1, PPFIBP1 and ERC1/ELKS serve as scaffolds for protein clustering. Interacts (via residues 1146-1167) with KANK1 (via ankyrin repeats 1-5) and KANK2 (via ankyrin repeats 1-5).

It is found in the cytoplasm. It localises to the cytoskeleton. The protein resides in the cell cortex. The protein localises to the cell projection. Its subcellular location is the axon. It is found in the dendrite. It localises to the growth cone. In terms of biological role, processive microtubule plus-end directed motor protein involved in neuronal axon guidance. Is recruited by KANK1 to cortical microtubule stabilizing complexes (CMSCs) at focal adhesions (FAs) rims where it promotes microtubule capture and stability. Controls microtubule polymerization rate at axonal growth cones and suppresses microtubule growth without inducing microtubule disassembly once it reaches the cell cortex. The polypeptide is Kinesin-like protein KIF21A (KIF21A) (Homo sapiens (Human)).